Consider the following 387-residue polypeptide: 1-deoxy-D-xylulose 5-phosphate reductoisomerase (387 aa).

Threonine 11, glycine 12, serine 13, isoleucine 14, glycine 37, arginine 39, and asparagine 123 together coordinate NADPH. Lysine 124 is a 1-deoxy-D-xylulose 5-phosphate binding site. Residue glutamate 125 coordinates NADPH. Aspartate 147 is a Mn(2+) binding site. 1-deoxy-D-xylulose 5-phosphate is bound by residues serine 148, glutamate 149, serine 173, and histidine 196. Glutamate 149 lines the Mn(2+) pocket. Residue glycine 202 participates in NADPH binding. Residues serine 209, asparagine 214, lysine 215, and glutamate 218 each coordinate 1-deoxy-D-xylulose 5-phosphate. Residue glutamate 218 participates in Mn(2+) binding.

This sequence belongs to the DXR family. Mg(2+) serves as cofactor. Requires Mn(2+) as cofactor.

The catalysed reaction is 2-C-methyl-D-erythritol 4-phosphate + NADP(+) = 1-deoxy-D-xylulose 5-phosphate + NADPH + H(+). It participates in isoprenoid biosynthesis; isopentenyl diphosphate biosynthesis via DXP pathway; isopentenyl diphosphate from 1-deoxy-D-xylulose 5-phosphate: step 1/6. Catalyzes the NADPH-dependent rearrangement and reduction of 1-deoxy-D-xylulose-5-phosphate (DXP) to 2-C-methyl-D-erythritol 4-phosphate (MEP). This is 1-deoxy-D-xylulose 5-phosphate reductoisomerase from Corynebacterium diphtheriae (strain ATCC 700971 / NCTC 13129 / Biotype gravis).